Consider the following 355-residue polypeptide: MHHRWLLLVACFWVLFMLMVASKLITLTMKDPEGYGNKQGPLTVLPETEKIAVAETTKLQIESQPTTNSLKDESYTVLLHKERTELLRSVCSNGSLRNLSHTAISKFVLDRIFVSDKHRILFCQTPKVGNTQWKKVLIVLNGAFSSIEEIPENVVHDHEKNGLPRLSSFSAQDVHERLNSYFKFFIVRDPFERLISAFKDKFVHNPRFEPWYKHDIAPAIIRKYRKDRRESRGGLQFQDFVRYLGDPNHRFLDLQFGDHIIHWVTYVELCAPCEIDYNVIGHHETLEDDAPYILREAGIEHLVSYPTIPPGITKYNKSKVENYFSKVSKRDIRRLYTRFERDFKLFGYKEPTFLF.

The Cytoplasmic portion of the chain corresponds to 1-6 (MHHRWL). Residues 7–27 (LLVACFWVLFMLMVASKLITL) form a helical; Signal-anchor for type II membrane protein membrane-spanning segment. Residues 28–355 (TMKDPEGYGN…FGYKEPTFLF (328 aa)) are Lumenal-facing. N-linked (GlcNAc...) asparagine glycosylation is found at N93 and N98. 3'-phosphoadenylyl sulfate is bound by residues 126–132 (PKVGNTQ) and 188–196 (RDPFERLIS). N316 carries an N-linked (GlcNAc...) asparagine glycan.

It belongs to the sulfotransferase 2 family.

The protein resides in the golgi apparatus membrane. Catalyzes the transfer of sulfate to position 3 of terminal glucuronic acid of both protein- and lipid-linked oligosaccharides. Participates in biosynthesis of HNK-1 carbohydrate structure, a sulfated glucuronyl-lactosaminyl residue carried by many neural recognition molecules. In Xenopus laevis (African clawed frog), this protein is Carbohydrate sulfotransferase 10 (chst10).